Here is a 668-residue protein sequence, read N- to C-terminus: CLK4-associating serine/arginine rich protein (668 aa).

Phosphoserine is present on serine 101. 2 disordered regions span residues 173 to 232 and 252 to 668; these read AEVE…GMAD and AKAL…HYRH. A compositionally biased stretch (acidic residues) spans 182-214; that stretch reads PEEEESPAEEESNSDEDEVIPDIDVEVDVDELN. The segment covering 265–283 has biased composition (basic residues); sequence RRSRRQRREFREKRLRGRK. Residues serine 285 and serine 294 each carry the phosphoserine modification. Over residues 290–313 the composition is skewed to basic and acidic residues; sequence ARRDSPTYDPYKRSPSESSSESRS. Phosphothreonine is present on threonine 327. Serine 331 and serine 335 each carry phosphoserine. Low complexity predominate over residues 340–353; the sequence is AAAAAAAAASGAAP. Positions 354–365 are enriched in pro residues; the sequence is GKPPAPPQPGGP. Over residues 378-395 the composition is skewed to low complexity; sequence SSSSASRTSSSRSSSRSS. Residues 396–435 are compositionally biased toward basic residues; it reads SRSRRGYYRSGRHARSRSRSWSRSRSRSRRYSRSRSRGRR. A compositionally biased stretch (basic and acidic residues) spans 436–446; that stretch reads HSDGGSRDGHR. Residues 475–486 are compositionally biased toward basic residues; the sequence is RGARGPRHHSSS. Composition is skewed to low complexity over residues 487–510 and 518–527; these read HSRS…SRSQ and QSHSQSQSHS. The residue at position 541 (serine 541) is a Phosphoserine. Threonine 567 bears the Phosphothreonine mark. A coiled-coil region spans residues 579–641; sequence ALNRQFKADK…ERQYSRQSRS (63 aa). Basic and acidic residues-rich tracts occupy residues 584–611 and 619–635; these read FKAD…ELRA and KERE…ERQY. Positions 636–645 are enriched in low complexity; sequence SRQSRSPSPR. Residues 653–668 are compositionally biased toward basic residues; the sequence is SRRRSRSRSRSPHYRH.

Belongs to the splicing factor SR family. Probably interacts with CLK4. Phosphorylated in vitro by CLK4.

The protein resides in the nucleus. Functionally, probably functions as an alternative splicing regulator. May regulate the mRNA splicing of genes such as CLK1. May act by regulating members of the CLK kinase family. The sequence is that of CLK4-associating serine/arginine rich protein (Clasrp) from Rattus norvegicus (Rat).